The sequence spans 478 residues: Divinyl ether synthase CYP74D1 (478 aa).

A heme-binding site is contributed by cysteine 431.

The protein belongs to the cytochrome P450 family. 9-divinyl ether synthase subfamily. As to expression, expressed in roots. Detected in stems, but not in flower buds, petioles, cotyledons or leaves.

The enzyme catalyses (9S)-hydroperoxy-(10E,12Z)-octadecadienoate = colneleate + H2O. It carries out the reaction (9S)-hydroperoxy-(10E,12Z,15Z)-octadecatrienoate = colnelenate + H2O. Involved in the biosynthesis of the anti-fungal toxins colneleate and colnelenate. Can use (9S)-hydroperoxy-(10E,12Z)-octadecadienoate (9-HPOD) and (9S)-hydroperoxy-(10E,12Z,15Z)-octadecatrienoate (9-HPOT) as substrates, but has a very low activity with the corresponding 13-hydroperoxides (13-HPOD and 13-POT). In Solanum lycopersicum (Tomato), this protein is Divinyl ether synthase CYP74D1.